Here is a 199-residue protein sequence, read N- to C-terminus: uncharacterized protein (199 aa).

This is an uncharacterized protein from Borreliella burgdorferi (strain ATCC 35210 / DSM 4680 / CIP 102532 / B31) (Borrelia burgdorferi).